A 585-amino-acid chain; its full sequence is Dihydroxy-acid dehydratase, mitochondrial (585 aa).

Residues 1 to 20 (MGLLTKVATSRQFSTTRCVA) constitute a mitochondrion transit peptide. Cys70 is a binding site for [2Fe-2S] cluster. Position 102 (Asp102) interacts with Mg(2+). Cys143 serves as a coordination point for [2Fe-2S] cluster. Asp144 contacts Mg(2+). Position 221 (Cys221) interacts with [2Fe-2S] cluster. Glu474 is a Mg(2+) binding site. The active-site Proton acceptor is Ser500.

The protein belongs to the IlvD/Edd family. It depends on [2Fe-2S] cluster as a cofactor. Requires Mg(2+) as cofactor.

The protein localises to the mitochondrion. The catalysed reaction is (2R)-2,3-dihydroxy-3-methylbutanoate = 3-methyl-2-oxobutanoate + H2O. It carries out the reaction (2R,3R)-2,3-dihydroxy-3-methylpentanoate = (S)-3-methyl-2-oxopentanoate + H2O. Its pathway is amino-acid biosynthesis; L-isoleucine biosynthesis; L-isoleucine from 2-oxobutanoate: step 3/4. The protein operates within amino-acid biosynthesis; L-valine biosynthesis; L-valine from pyruvate: step 3/4. With respect to regulation, catalytic activity is inactivated under iron-limiting conditions. Dihydroxyacid dehydratase that catalyzes the third step in the common pathway leading to biosynthesis of branched-chain amino acids. Catalyzes the dehydration of (2R,3R)-2,3-dihydroxy-3-methylpentanoate (2,3-dihydroxy-3-methylvalerate) into 2-oxo-3-methylpentanoate (2-oxo-3-methylvalerate) and of (2R)-2,3-dihydroxy-3-methylbutanoate (2,3-dihydroxyisovalerate) into 2-oxo-3-methylbutanoate (2-oxoisovalerate), the penultimate precursor to L-isoleucine and L-valine, respectively. Required for the synthesis of alpha-isopropylmalate which modulates the activity of LEU3 and subsequently regulates the expression of LEU1. In Saccharomyces cerevisiae (strain ATCC 204508 / S288c) (Baker's yeast), this protein is Dihydroxy-acid dehydratase, mitochondrial.